A 448-amino-acid chain; its full sequence is Tumor necrosis factor receptor superfamily member EDAR (448 aa).

An N-terminal signal peptide occupies residues 1 to 26 (MAHVGDCKWMSWLPVLVVSLMCSAKA). Topologically, residues 27–187 (EDSNCGENEY…LSGQGHLATA (161 aa)) are extracellular. TNFR-Cys repeat units follow at residues 30 to 71 (NCGE…DYGC), 73 to 113 (PCPA…DAEC), and 115 to 150 (PCLP…ECVG). Intrachain disulfides connect Cys31-Cys44, Cys47-Cys60, Cys50-Cys71, Cys74-Cys87, Cys93-Cys113, and Cys135-Cys148. Asn38 carries an N-linked (GlcNAc...) asparagine glycan. The chain crosses the membrane as a helical span at residues 188–208 (LIIAMSTIFIMAIAIVLIIMF). Residues 209 to 448 (YIMKTKPSAP…PPASPPPAAS (240 aa)) are Cytoplasmic-facing. Residues 220 to 229 (CCSSPPGKSA) are compositionally biased toward low complexity. Residues 220-297 (CCSSPPGKSA…EEPAPDKQGS (78 aa)) are disordered. Polar residues predominate over residues 258–283 (LTATPTKTPKSENDASSENEQLLSRS). Positions 358-431 (RMLSSTYNSE…DAVESLCADI (74 aa)) constitute a Death domain.

Binds to EDARADD. Associates with TRAF1, TRAF2, TRAF3 and NIK.

It is found in the membrane. Receptor for EDA isoform TAA, but not for EDA isoform TA-2. May mediate the activation of NF-kappa-B and JNK. May promote caspase-independent cell death. This is Tumor necrosis factor receptor superfamily member EDAR (Edar) from Mus musculus (Mouse).